A 167-amino-acid chain; its full sequence is Pathogenesis-related protein PRMS (167 aa).

Positions 1–27 (MEASNKLAVLLLWLVMAAATAVHPSYS) are cleaved as a signal peptide. In terms of domain architecture, SCP spans 37–155 (PQNSARAAVG…NRGVFIICNY (119 aa)). Cystine bridges form between Cys71–Cys143, Cys116–Cys122, and Cys138–Cys153.

It belongs to the CRISP family.

Probably involved in the defense reaction of plants against pathogens. The protein is Pathogenesis-related protein PRMS (PRMS) of Zea mays (Maize).